Reading from the N-terminus, the 311-residue chain is Sensor histidine kinase YcbM (311 aa).

A helical membrane pass occupies residues 1–21 (MTVLWVAAVIALACLNVIQFI). The Cytoplasmic portion of the chain corresponds to 22-311 (MKKKRDGNLA…FTITLKRMTY (290 aa)). Positions 92–310 (NMSHDLKTPL…AFTITLKRMT (219 aa)) constitute a Histidine kinase domain. His95 carries the phosphohistidine; by autocatalysis modification.

The protein resides in the cell membrane. The enzyme catalyses ATP + protein L-histidine = ADP + protein N-phospho-L-histidine.. Member of the two-component regulatory system YcbM/YcbL. Probably activates YcbL by phosphorylation. This Bacillus subtilis (strain 168) protein is Sensor histidine kinase YcbM (ycbM).